A 277-amino-acid polypeptide reads, in one-letter code: Diaminopimelate epimerase (277 aa).

Substrate is bound by residues N15, Q48, and N66. C75 (proton donor) is an active-site residue. Substrate-binding positions include 76-77 (GN), N156, N189, and 207-208 (ER). C216 acts as the Proton acceptor in catalysis. 217 to 218 (GS) is a substrate binding site.

This sequence belongs to the diaminopimelate epimerase family. In terms of assembly, homodimer.

The protein localises to the cytoplasm. It catalyses the reaction (2S,6S)-2,6-diaminopimelate = meso-2,6-diaminopimelate. It participates in amino-acid biosynthesis; L-lysine biosynthesis via DAP pathway; DL-2,6-diaminopimelate from LL-2,6-diaminopimelate: step 1/1. In terms of biological role, catalyzes the stereoinversion of LL-2,6-diaminopimelate (L,L-DAP) to meso-diaminopimelate (meso-DAP), a precursor of L-lysine and an essential component of the bacterial peptidoglycan. This chain is Diaminopimelate epimerase, found in Acidiphilium cryptum (strain JF-5).